Consider the following 344-residue polypeptide: Peroxidase 36 (344 aa).

The N-terminal stretch at 1 to 28 (MNTKTVKSMAGIVLSQISLVALFPLCIC) is a signal peptide. Disulfide bonds link Cys-50–Cys-130, Cys-83–Cys-88, Cys-136–Cys-337, and Cys-215–Cys-247. His-81 functions as the Proton acceptor in the catalytic mechanism. Residues Asp-82, Val-85, Gly-87, Asp-89, and Ser-91 each coordinate Ca(2+). Residue Pro-178 coordinates substrate. His-208 is a binding site for heme b. Thr-209 serves as a coordination point for Ca(2+). N-linked (GlcNAc...) asparagine glycosylation occurs at Asn-224. Ca(2+) is bound by residues Asp-260, Thr-263, and Asp-268.

This sequence belongs to the peroxidase family. Classical plant (class III) peroxidase subfamily. Requires heme b as cofactor. It depends on Ca(2+) as a cofactor.

The protein localises to the secreted. The catalysed reaction is 2 a phenolic donor + H2O2 = 2 a phenolic radical donor + 2 H2O. Functionally, removal of H(2)O(2), oxidation of toxic reductants, biosynthesis and degradation of lignin, suberization, auxin catabolism, response to environmental stresses such as wounding, pathogen attack and oxidative stress. These functions might be dependent on each isozyme/isoform in each plant tissue. This Arabidopsis thaliana (Mouse-ear cress) protein is Peroxidase 36 (PER36).